Consider the following 403-residue polypeptide: L-lactate oxidase (403 aa).

The FMN hydroxy acid dehydrogenase domain occupies 21 to 375 (EGSVDFVNVF…KHFKLRHNPY (355 aa)). Tyr-47 provides a ligand contact to pyruvate. FMN contacts are provided by residues 99 to 101 (PVA), Ser-128, and Gln-150. Tyr-152 provides a ligand contact to pyruvate. Thr-178 is a binding site for FMN. Residues Arg-187 and Tyr-220 each coordinate pyruvate. FMN is bound at residue Lys-246. Residues His-270 and Arg-273 each coordinate pyruvate. Residue His-270 is the Proton acceptor of the active site. FMN contacts are provided by residues 301–305 (DSGVR) and Arg-325.

Belongs to the FMN-dependent alpha-hydroxy acid dehydrogenase family. Homotetramer. FMN serves as cofactor.

The enzyme catalyses (S)-lactate + O2 = pyruvate + H2O2. Functionally, catalyzes the oxidation of (S)-lactate (L-lactate) to pyruvate, with a reduction of O2 to H2O2. Is likely involved in the L-lactate aerobic metabolism of S.iniae that enables the bacterium to utilize L-lactate as an energy source for growth under aerobic conditions in the absence (or at low concentrations) of glucose. The protein is L-lactate oxidase of Streptococcus iniae (Streptococcus shiloi).